We begin with the raw amino-acid sequence, 118 residues long: Protein TusC (118 aa).

The protein belongs to the DsrF/TusC family. Heterohexamer, formed by a dimer of trimers. The hexameric TusBCD complex contains 2 copies each of TusB, TusC and TusD. The TusBCD complex interacts with TusE.

It is found in the cytoplasm. In terms of biological role, part of a sulfur-relay system required for 2-thiolation of 5-methylaminomethyl-2-thiouridine (mnm(5)s(2)U) at tRNA wobble positions. The chain is Protein TusC from Salmonella typhimurium (strain LT2 / SGSC1412 / ATCC 700720).